The primary structure comprises 1265 residues: MAPTLQDLTPSAGMKKTLQDEIEAILQERIMVLDGGMGTMIQRHKLSEEDFRGQEFKDHARPLKGNNDILSITQPNVIYQIHKEYLLAGADIIETNTFSSTSIAQADYGLEHLAYRMNMCSAGVARKAAEDISLQTGIKRYVAGALGPTNKTLSVSPSVERPDYRNITFDELVEAYKEQAKGLLDGGVDILLIETIFDTANAKAALFAVQKLFEEEYVPRPVFISGTIVDKSGRTLSGQTGEAFVISVSHADPLCIGLNCALGAAEMRPFIETIGKCTTAYVLCYPNAGLPNTFGDYDETPHVMAMHLKDFAVDGLVNIVGGCCGTTPDHIREIAEAVKNCKPRVPPATVFEGHMLLSGLEPFRIGPYTNFVNIGERCNVAGSRRFAKLIMAGNYEEALSVAKMQVEMGAQVLDINMDDGMLDGPSAMTRFCNFIASEPDIAKVPLCIDSSNFAVIEAGLKCCQGKCIVNSISLKEGEDDFLEKARKIKKFGAAVVVMAFDEEGQATETDPKIRVCTRAYHLLLKKLGFNPNDIIFDPNILTIGTGMEEHNLYAVNFINATKVIKETLPGAKVSGGLSNLSFSFRGMEAIREAMHGVFLYHAIKFGMDMGIVNAGSLPVYDDIHKELLQLCEDLIWNRDPEATEKLLHYAQTQGKGGKKVIQTDEWRNGPLEERLEYALVKGIEKYIIEDTEEARLNQEKYPRPLNIIEGPLMNGMKIVGDLFGAGKMFLPQVIKSARVMKKAVGHLIPFMEKEREETKVLTGKIEDEDPYQGTIVLATVKGDVHDIGKNIVGVVLGCNNFRVIDLGVMTPCDKILKAALDHKADIIGLSGLITPSLDEMIFVAKEMERLAIKIPLLIGGATTSRTHTAVKIAPRYSAPVIHVLDASKSVVVCSQLLDENLKDEYFEEILEEYEDIRQDHYESLKERRYLTLRQARENGFHIDWLSEPPPVKPTFLGTRVFEDYDLQKLVDYIDWKPFFDVWQLRGKYPNRGFPKIFDDKTVGEEAKKVYDDAQNMLQALISQKKLQARGVVGFWPAQSIQDDIHLYAEGAVPQASEPIATFYGLRQQAEKDSASSDPYLCLSDFIAPLHSGIPDYLGLFAVACFGVEELSKAYEEECDDYSSIMVKALGDRLAEAFAEELHERARRELWGYCSGEQLAVADLRRLRYEGIRPAPGYPSQPDHTEKLTVWRLADVEQRTGIRLTESLAMAPASAVSGLYFSNLKSKYFAVGKISKDQIEDYASRKNMSVAEVEKWLGPILGYDTD.

Positions 19-338 (QDEIEAILQE…DHIREIAEAV (320 aa)) constitute a Hcy-binding domain. Cys260, Cys323, and Cys324 together coordinate Zn(2+). Residues 371-632 (FVNIGERCNV…IHKELLQLCE (262 aa)) form the Pterin-binding domain. (6S)-5,6,7,8-tetrahydrofolate contacts are provided by residues 382–384 (GSR), Asp449, Asn470, Asp537, Asn579, Arg585, and Arg591. One can recognise a B12-binding N-terminal domain in the interval 662–759 (QTDEWRNGPL…FMEKEREETK (98 aa)). Methylcob(III)alamin is bound by residues Glu709, 782–786 (GDVHD), His785, Ser830, Thr834, and Ala886. Residues 772–907 (QGTIVLATVK…DENLKDEYFE (136 aa)) enclose the B12-binding domain. Residues 923–1265 (SLKERRYLTL…LGPILGYDTD (343 aa)) enclose the AdoMet activation domain. S-adenosyl-L-methionine is bound by residues Asp974, Arg1172, and 1227–1228 (YF). Thr1264 bears the Phosphothreonine mark.

It belongs to the vitamin-B12 dependent methionine synthase family. In terms of assembly, monomer. Dimer. Forms a multiprotein complex with MMACHC, MMADHC and MTRR. Methylcob(III)alamin is required as a cofactor. It depends on Zn(2+) as a cofactor.

The protein resides in the cytoplasm. It carries out the reaction (6S)-5-methyl-5,6,7,8-tetrahydrofolate + L-homocysteine = (6S)-5,6,7,8-tetrahydrofolate + L-methionine. Its pathway is amino-acid biosynthesis; L-methionine biosynthesis via de novo pathway; L-methionine from L-homocysteine (MetH route): step 1/1. Its function is as follows. Catalyzes the transfer of a methyl group from methylcob(III)alamin (MeCbl) to homocysteine, yielding enzyme-bound cob(I)alamin and methionine in the cytosol. MeCbl is an active form of cobalamin (vitamin B12) used as a cofactor for methionine biosynthesis. Cob(I)alamin form is regenerated to MeCbl by a transfer of a methyl group from 5-methyltetrahydrofolate. The processing of cobalamin in the cytosol occurs in a multiprotein complex composed of at least MMACHC, MMADHC, MTRR (methionine synthase reductase) and MTR which may contribute to shuttle safely and efficiently cobalamin towards MTR in order to produce methionine. The protein is Methionine synthase (MTR) of Bos taurus (Bovine).